Reading from the N-terminus, the 213-residue chain is NADH dehydrogenase [ubiquinone] iron-sulfur protein 7, mitochondrial (213 aa).

A mitochondrion-targeting transit peptide spans 1-31 (MALIARNAKLLTGTAPFLQRAATIHTTLPSL). The segment covering 30 to 42 (SLSQQPASSPATS) has biased composition (low complexity). The disordered stretch occupies residues 30-52 (SLSQQPASSPATSGGAQPPSMNT). Residues C88, C89, C153, and C183 each contribute to the [4Fe-4S] cluster site.

The protein belongs to the complex I 20 kDa subunit family. As to quaternary structure, complex I is composed of about 45 different subunits. This is a component of the iron-sulfur (IP) fragment of the enzyme. Requires [4Fe-4S] cluster as cofactor.

The protein localises to the mitochondrion. The enzyme catalyses a ubiquinone + NADH + 5 H(+)(in) = a ubiquinol + NAD(+) + 4 H(+)(out). Functionally, core subunit of the mitochondrial membrane respiratory chain NADH dehydrogenase (Complex I) that is believed to belong to the minimal assembly required for catalysis. Complex I functions in the transfer of electrons from NADH to the respiratory chain. The immediate electron acceptor for the enzyme is believed to be ubiquinone. This chain is NADH dehydrogenase [ubiquinone] iron-sulfur protein 7, mitochondrial, found in Solanum tuberosum (Potato).